The sequence spans 136 residues: MSRPTIIINDLDAERIDILLEQPAYAGLPIADALNAELDRAQMCSPEEMPHDVVTMNSRVKFRNLSDGEVRVRTLVYPAKMTDSNTQLSVMAPVGAALLGLRVGDSIHWELPGGVATHLEVLELEYQPEAAGDYLL.

The protein belongs to the Rnk family. In terms of assembly, interacts with the RNA polymerase.

Functionally, may act as an anti-Gre factor. In Escherichia coli O6:H1 (strain CFT073 / ATCC 700928 / UPEC), this protein is Regulator of nucleoside diphosphate kinase.